The following is a 371-amino-acid chain: Ecto-ADP-ribosyltransferase 3 (371 aa).

Residues Met-1–Ala-26 form the signal peptide. A disulfide bridge links Cys-43 with Cys-255. Positions Ala-64–Cys-250 constitute a TR mART core domain. NAD(+) contacts are provided by Tyr-101 and Asn-182. A disordered region spans residues Val-306–Ser-346. Ser-345 is lipidated: GPI-anchor amidated serine. Positions Ser-346–Leu-371 are cleaved as a propeptide — removed in mature form.

Belongs to the Arg-specific ADP-ribosyltransferase family.

The protein resides in the cell membrane. It catalyses the reaction L-arginyl-[protein] + NAD(+) = N(omega)-(ADP-D-ribosyl)-L-arginyl-[protein] + nicotinamide + H(+). This chain is Ecto-ADP-ribosyltransferase 3 (Art3), found in Mus musculus (Mouse).